A 237-amino-acid polypeptide reads, in one-letter code: H/ACA ribonucleoprotein complex subunit 1 (237 aa).

Gly residues-rich tracts occupy residues Met-1–Gly-59 and Arg-172–Trp-237. Disordered regions lie at residues Met-1 to Gly-64 and Lys-157 to Trp-237. RGG-box regions lie at residues Gly-4–Gly-56 and Lys-166–Arg-236.

It belongs to the GAR1 family. In terms of assembly, component of the box H/ACA small nucleolar ribonucleoprotein (H/ACA snoRNP) complex consisting of Nop60B, Gar1, NPH2 and Nop10, and associated with H/ACA-type snoRNAs.

The protein resides in the nucleus. It localises to the nucleolus. In terms of biological role, component of the box H/ACA small nucleolar ribonucleoprotein (H/ACA snoRNP) complex, which catalyzes pseudouridylation of rRNA. This involves the isomerization of uridine such that the ribose is subsequently attached to C5, instead of the normal N1. Pseudouridine ('psi') residues may serve to stabilize the conformation of rRNAs. Required for ribosome biogenesis. H/ACA snoRNP complex-dependent ribosome biogenesis is important in female germline cell differentiation during oogenesis. This Drosophila melanogaster (Fruit fly) protein is H/ACA ribonucleoprotein complex subunit 1.